A 233-amino-acid chain; its full sequence is GSK-3-binding protein FRAT2 (233 aa).

A disordered region spans residues 1 to 24; sequence MPCRREEEEEAGEEAEGEEEEDDS. Acidic residues predominate over residues 7-24; it reads EEEEAGEEAEGEEEEDDS. Positions 174–196 are involved in GSK-3 binding; that stretch reads DPHRLLQQLVLSGNLIKEAVRRL. The interval 204 to 233 is disordered; it reads AATGPASAPGPGGGRSGPDRIALQPSGSLL.

This sequence belongs to the GSK-3-binding protein family. As to quaternary structure, binds GSK-3 and prevents GSK-3-dependent phosphorylation.

Functionally, positively regulates the Wnt signaling pathway by stabilizing beta-catenin through the association with GSK-3. This is GSK-3-binding protein FRAT2 (FRAT2) from Homo sapiens (Human).